The primary structure comprises 599 residues: uncharacterized protein (599 aa).

Residue 49–56 participates in ATP binding; the sequence is GPPGSGKT. Residues 416-599 enclose the Macro domain; sequence AEVRKELEYK…TKIFEEKFSV (184 aa).

The protein in the N-terminal section; belongs to the AAA ATPase family. RarA/MGS1/WRNIP1 subfamily.

This is an uncharacterized protein from Thermotoga maritima (strain ATCC 43589 / DSM 3109 / JCM 10099 / NBRC 100826 / MSB8).